We begin with the raw amino-acid sequence, 382 residues long: Lipid-A-disaccharide synthase (382 aa).

The protein belongs to the LpxB family.

It carries out the reaction 2-N,3-O-bis[(3R)-3-hydroxytetradecanoyl]-alpha-D-glucosaminyl 1-phosphate + UDP-2-N,3-O-bis[(3R)-3-hydroxytetradecanoyl]-alpha-D-glucosamine = lipid A disaccharide (E. coli) + UDP + H(+). The catalysed reaction is a lipid X + a UDP-2-N,3-O-bis[(3R)-3-hydroxyacyl]-alpha-D-glucosamine = a lipid A disaccharide + UDP + H(+). Its pathway is glycolipid biosynthesis; lipid IV(A) biosynthesis; lipid IV(A) from (3R)-3-hydroxytetradecanoyl-[acyl-carrier-protein] and UDP-N-acetyl-alpha-D-glucosamine: step 5/6. Functionally, condensation of UDP-2,3-diacylglucosamine and 2,3-diacylglucosamine-1-phosphate to form lipid A disaccharide, a precursor of lipid A, a phosphorylated glycolipid that anchors the lipopolysaccharide to the outer membrane of the cell. This is Lipid-A-disaccharide synthase from Shigella flexneri.